We begin with the raw amino-acid sequence, 234 residues long: Purine nucleoside phosphorylase DeoD-type (234 aa).

H4 contributes to the a purine D-ribonucleoside binding site. Phosphate is bound by residues G20, R24, R43, and 87–90 (RVGT). A purine D-ribonucleoside-binding positions include E162, 178 to 180 (EME), and 202 to 203 (SD). D203 acts as the Proton donor in catalysis.

This sequence belongs to the PNP/UDP phosphorylase family. In terms of assembly, homohexamer; trimer of homodimers.

It catalyses the reaction a purine D-ribonucleoside + phosphate = a purine nucleobase + alpha-D-ribose 1-phosphate. The enzyme catalyses a purine 2'-deoxy-D-ribonucleoside + phosphate = a purine nucleobase + 2-deoxy-alpha-D-ribose 1-phosphate. In terms of biological role, catalyzes the reversible phosphorolytic breakdown of the N-glycosidic bond in the beta-(deoxy)ribonucleoside molecules, with the formation of the corresponding free purine bases and pentose-1-phosphate. Its function is as follows. Cleavage of adenosine and its derivatives. The protein is Purine nucleoside phosphorylase DeoD-type of Geobacillus stearothermophilus (Bacillus stearothermophilus).